We begin with the raw amino-acid sequence, 390 residues long: MRVVLIVLDSVGIGEMPDAHLYGDEGSNTIVNTAKAVGGLHLPNMAKLGLGNLDDIPGVEPVKPAEGIYGKMMEKSPGKDTTTGHWEIAGVILKKPFDLFPNGFPKELIEEFERRTGRKVIGNKPASGTEIIKELGPIHEKTGALIVYTSADSVFQIAAKKEIVPVEELYRYCKIARELLDEMGYKVARVIARPFTGEWPNYVRTPERKDFSLEPEGKTLLDVLTENGIPVYGVGKIADIFAGRGVTENYKTKDNNDGIDKTISLMKEKNHDCLIFTNLVDFDTKYGHRNDPVSYARALEEFDVRLPEIIQNLKEDDVLFITADHGCDPTTPSTDHSREMVPLLGYGGRLKKDVYVGIRETFADLGQTIADIFGVPPLENGTSFKNLIWE.

Mn(2+) is bound by residues Asp9, Asp283, His288, Asp324, His325, and His336.

Belongs to the phosphopentomutase family. Mn(2+) is required as a cofactor.

Its subcellular location is the cytoplasm. It catalyses the reaction 2-deoxy-alpha-D-ribose 1-phosphate = 2-deoxy-D-ribose 5-phosphate. It carries out the reaction alpha-D-ribose 1-phosphate = D-ribose 5-phosphate. Its pathway is carbohydrate degradation; 2-deoxy-D-ribose 1-phosphate degradation; D-glyceraldehyde 3-phosphate and acetaldehyde from 2-deoxy-alpha-D-ribose 1-phosphate: step 1/2. Its function is as follows. Isomerase that catalyzes the conversion of deoxy-ribose 1-phosphate (dRib-1-P) and ribose 1-phosphate (Rib-1-P) to deoxy-ribose 5-phosphate (dRib-5-P) and ribose 5-phosphate (Rib-5-P), respectively. This Thermotoga petrophila (strain ATCC BAA-488 / DSM 13995 / JCM 10881 / RKU-1) protein is Phosphopentomutase.